The following is a 130-amino-acid chain: Large ribosomal subunit protein bL12c (130 aa).

It belongs to the bacterial ribosomal protein bL12 family. In terms of assembly, homodimer. Part of the ribosomal stalk of the 50S ribosomal subunit. Forms a multimeric L10(L12)X complex, where L10 forms an elongated spine to which 2 to 4 L12 dimers bind in a sequential fashion. Binds GTP-bound translation factors.

Its subcellular location is the plastid. The protein localises to the chloroplast. Functionally, forms part of the ribosomal stalk which helps the ribosome interact with GTP-bound translation factors. Is thus essential for accurate translation. This is Large ribosomal subunit protein bL12c from Cyanidium caldarium (Red alga).